The primary structure comprises 490 residues: Betaine aldehyde dehydrogenase (490 aa).

K(+) is bound by residues S26, I27, and D93. An NAD(+)-binding site is contributed by 150-152 (GAW). K162 (charge relay system) is an active-site residue. NAD(+) is bound by residues 176–179 (KPSE) and 230–233 (GVET). L246 is a K(+) binding site. The active-site Proton acceptor is E252. NAD(+) contacts are provided by G254, C286, and E387. C286 (nucleophile) is an active-site residue. C286 carries the post-translational modification Cysteine sulfenic acid (-SOH). K(+) contacts are provided by K457 and G460. Residue E464 is the Charge relay system of the active site.

This sequence belongs to the aldehyde dehydrogenase family. Dimer of dimers. It depends on K(+) as a cofactor.

The catalysed reaction is betaine aldehyde + NAD(+) + H2O = glycine betaine + NADH + 2 H(+). Its pathway is amine and polyamine biosynthesis; betaine biosynthesis via choline pathway; betaine from betaine aldehyde: step 1/1. Functionally, involved in the biosynthesis of the osmoprotectant glycine betaine. Catalyzes the irreversible oxidation of betaine aldehyde to the corresponding acid. This Acinetobacter baumannii (strain SDF) protein is Betaine aldehyde dehydrogenase.